A 527-amino-acid chain; its full sequence is FHA domain-containing protein FhaA (527 aa).

Residue Thr-116 is modified to Phosphothreonine. Positions 119–426 are disordered; that stretch reads FRARGTVNPD…APGGYSGYGQ (308 aa). Residues 170 to 188 show a composition bias toward basic and acidic residues; that stretch reads RPDEYYDDRYARPQEDPRG. 2 stretches are compositionally biased toward low complexity: residues 199-209 and 256-266; these read RGGYPPETGGY and YQDQGRGYPDQ. The span at 271–283 shows a compositional bias: pro residues; the sequence is YPPPYEQRPPVSP. Over residues 284–299 the composition is skewed to low complexity; the sequence is GPAAGYGAPGYDQGYR. Positions 300 to 322 are enriched in gly residues; that stretch reads QSGGYGPSPGGGQPGYGGYGEYG. Residues 345–366 are compositionally biased toward low complexity; the sequence is RPAYPDQGGYDQGYQQGATTYG. One can recognise an FHA domain in the interval 455–504; the sequence is NIIGRGQDAQFRLPDTGVSRRHLEIRWDGQVALLADLNSTNGTTVNNAPV.

Interacts with (phosphorylated) MviN and (phosphorylated) PknB via the FHA domain. Binds to the PknB juxtamembrane domain with an affinity that is modulated by the degree and the pattern of phosphorylation of this juxtamembrane domain. In terms of processing, phosphorylated by PknB.

The protein resides in the cytoplasm. Functionally, regulates cell growth and peptidoglycan synthesis by binding to MviN. May inhibit the late stages of peptidoglycan synthesis. The sequence is that of FHA domain-containing protein FhaA (fhaA) from Mycobacterium tuberculosis (strain ATCC 25618 / H37Rv).